The chain runs to 156 residues: Small ribosomal subunit protein uS7 (156 aa).

This sequence belongs to the universal ribosomal protein uS7 family. As to quaternary structure, part of the 30S ribosomal subunit. Contacts proteins S9 and S11.

One of the primary rRNA binding proteins, it binds directly to 16S rRNA where it nucleates assembly of the head domain of the 30S subunit. Is located at the subunit interface close to the decoding center, probably blocks exit of the E-site tRNA. The sequence is that of Small ribosomal subunit protein uS7 from Edwardsiella ictaluri (strain 93-146).